The sequence spans 165 residues: Small ribosomal subunit protein uS5 (165 aa).

The 64-residue stretch at 10–73 folds into the S5 DRBM domain; that stretch reads LKEKVVHINR…EDAKKNIVEV (64 aa).

The protein belongs to the universal ribosomal protein uS5 family. As to quaternary structure, part of the 30S ribosomal subunit. Contacts proteins S4 and S8.

Its function is as follows. With S4 and S12 plays an important role in translational accuracy. Functionally, located at the back of the 30S subunit body where it stabilizes the conformation of the head with respect to the body. In Clostridium botulinum (strain ATCC 19397 / Type A), this protein is Small ribosomal subunit protein uS5.